Reading from the N-terminus, the 913-residue chain is Chitin synthase 1 (913 aa).

The tract at residues 1–27 is disordered; that stretch reads MSGAPPPSSGFAPRSYGQQPLSHAPRS. UDP-N-acetyl-alpha-D-glucosamine is bound by residues Thr237, Glu241, and Asp291. Asn420 carries N-linked (GlcNAc...) asparagine glycosylation. The active site involves Asp496. An N-linked (GlcNAc...) asparagine glycan is attached at Asn510. 6 consecutive transmembrane segments (helical) span residues 539–559, 581–601, 625–645, 658–678, 684–704, and 711–731; these read WLNG…RIYS, YTAF…FIVF, AVYI…IIGL, FVGA…AGIF, TVHS…ASAL, and IFMT…IFTI. The Conserved SWG motif motif lies at 741-743; the sequence is SWG. Transmembrane regions (helical) follow at residues 800 to 820 and 825 to 845; these read VLLT…YFAS and MPVL…GSIG. Residues Asn867 and Asn900 are each glycosylated (N-linked (GlcNAc...) asparagine).

It belongs to the chitin synthase family. Class II subfamily. As to quaternary structure, homodimer. The cofactor is Mn(2+).

It localises to the cell membrane. The enzyme catalyses [(1-&gt;4)-N-acetyl-beta-D-glucosaminyl](n) + UDP-N-acetyl-alpha-D-glucosamine = [(1-&gt;4)-N-acetyl-beta-D-glucosaminyl](n+1) + UDP + H(+). The activity is inhibited by nikkomycin Z (NikZ). In terms of biological role, polymerizes chitin, a structural polymer of the cell wall and septum, by transferring the sugar moiety of UDP-GlcNAc to the non-reducing end of the growing chitin polymer. Involved in mycelial growth, sporangial production, zoospore release and pathogenesis. The sequence is that of Chitin synthase 1 from Phytophthora sojae (strain P6497) (Soybean stem and root rot agent).